The chain runs to 449 residues: Tubulin alpha-2 chain (449 aa).

Q11 is a GTP binding site. Position 40 is an N6-acetyllysine (K40). GTP contacts are provided by E71, S140, G144, T145, T179, N206, and N228. Residue E71 participates in Mg(2+) binding. Residue E254 is part of the active site.

It belongs to the tubulin family. As to quaternary structure, dimer of alpha and beta chains. A typical microtubule is a hollow water-filled tube with an outer diameter of 25 nm and an inner diameter of 15 nM. Alpha-beta heterodimers associate head-to-tail to form protofilaments running lengthwise along the microtubule wall with the beta-tubulin subunit facing the microtubule plus end conferring a structural polarity. Microtubules usually have 13 protofilaments but different protofilament numbers can be found in some organisms and specialized cells. The cofactor is Mg(2+). Undergoes a tyrosination/detyrosination cycle, the cyclic removal and re-addition of a C-terminal tyrosine residue by the enzymes tubulin tyrosine carboxypeptidase (TTCP) and tubulin tyrosine ligase (TTL), respectively. Post-translationally, acetylation of alpha chains at Lys-40 stabilizes microtubules and affects affinity and processivity of microtubule motors. This modification has a role in multiple cellular functions, ranging from cell motility, cell cycle progression or cell differentiation to intracellular trafficking and signaling. During the early stages of oogenesis lky/Alpha-tubulin N-acetyltransferase 2 is the main acetyltransferase responsible for Lys-40 acetylation in germline cells while Atat/alpha-tubulin N-acetyltransferase 1 is the main acetyltransferase responsible for Lys-40 acetylation in somatic cells.

The protein resides in the cytoplasm. Its subcellular location is the cytoskeleton. The enzyme catalyses GTP + H2O = GDP + phosphate + H(+). Functionally, tubulin is the major constituent of microtubules, a cylinder consisting of laterally associated linear protofilaments composed of alpha- and beta-tubulin heterodimers. Microtubules grow by the addition of GTP-tubulin dimers to the microtubule end, where a stabilizing cap forms. Below the cap, tubulin dimers are in GDP-bound state, owing to GTPase activity of alpha-tubulin. The protein is Tubulin alpha-2 chain (alphaTub85E) of Drosophila melanogaster (Fruit fly).